Consider the following 305-residue polypeptide: MPSKLFVGNLPDNVDSNKLKQVFQPFCKVTECDIVKNYAFVHIEEDDVDPIITRLTGYTIDGKVVNIKKSTSKLRPTPGMPNRCFRCQSDEHRTPQCPQDPTNNQKTENGVQTLKFDLTSGAGVKRSAGDPIIDSAKRIAYGAQSVVEPEIPQPMDPDLQALYQEYQLSRQRYVYYRDRLLKEMEAKQHGSTAGFALSSSSTVPVPVASAPPGATQLSAAPVSYQPNAPPVIASINAPYAVASNLRAPYALQSAPYASAASAPYGSVTPAGAPSNVMTTQQYLQQIQHQQATGSPAPVPAPPRLY.

The RRM domain occupies 3 to 72 (SKLFVGNLPD…KVVNIKKSTS (70 aa)). Residues 84-97 (CFRCQSDEHRTPQC) form a CCHC-type zinc finger. The disordered stretch occupies residues 284–305 (QQIQHQQATGSPAPVPAPPRLY). The segment covering 296-305 (APVPAPPRLY) has biased composition (pro residues).

In terms of tissue distribution, expressed throughout the germline.

RNA-binding protein that is required for the germ line to transition from spermatogenesis to oogenesis and allow for normal oocyte development. The polypeptide is RNA-binding protein rnp-1 (Caenorhabditis elegans).